Consider the following 232-residue polypeptide: Ubiquinone biosynthesis O-methyltransferase (232 aa).

S-adenosyl-L-methionine-binding residues include Arg-36, Gly-55, Asp-76, and Leu-120.

It belongs to the methyltransferase superfamily. UbiG/COQ3 family.

It catalyses the reaction a 3-demethylubiquinol + S-adenosyl-L-methionine = a ubiquinol + S-adenosyl-L-homocysteine + H(+). The enzyme catalyses a 3-(all-trans-polyprenyl)benzene-1,2-diol + S-adenosyl-L-methionine = a 2-methoxy-6-(all-trans-polyprenyl)phenol + S-adenosyl-L-homocysteine + H(+). The protein operates within cofactor biosynthesis; ubiquinone biosynthesis. Functionally, O-methyltransferase that catalyzes the 2 O-methylation steps in the ubiquinone biosynthetic pathway. The sequence is that of Ubiquinone biosynthesis O-methyltransferase from Dechloromonas aromatica (strain RCB).